A 542-amino-acid polypeptide reads, in one-letter code: Global nitrogen regulator NrpR (542 aa).

Residues 12–77 (IEILDILSKS…VITERGLEEL (66 aa)) are winged helix-turn-helix. NRD regions lie at residues 85-320 (RLGS…KANI) and 321-542 (RIKT…YKEI).

This sequence belongs to the NrpR family. In terms of assembly, homodimer.

Its activity is regulated as follows. Under nitrogen limitation, binding of the intracellular nitrogen metabolite 2-oxoglutarate to NrpR decreases the binding affinity of NrpR to DNA, leading to initiation of transcription. Functionally, transcriptional repressor of nitrogen fixation and assimilation genes. Binds to two tandem operators in the glnA and nif promoters, thereby blocking transcription of the genes. The sequence is that of Global nitrogen regulator NrpR from Methanocaldococcus jannaschii (strain ATCC 43067 / DSM 2661 / JAL-1 / JCM 10045 / NBRC 100440) (Methanococcus jannaschii).